Here is a 678-residue protein sequence, read N- to C-terminus: DNA ligase (678 aa).

Residues 36–40 (DVVYD), 85–86 (SL), and Glu-117 each bind NAD(+). The active-site N6-AMP-lysine intermediate is the Lys-119. Residues Arg-140, Glu-177, Lys-294, and Lys-318 each coordinate NAD(+). 4 residues coordinate Zn(2+): Cys-412, Cys-415, Cys-430, and Cys-435. Residues 598 to 678 (ISSTPLAGKT…QLLKMINPQE (81 aa)) enclose the BRCT domain.

Belongs to the NAD-dependent DNA ligase family. LigA subfamily. The cofactor is Mg(2+). Mn(2+) serves as cofactor.

The catalysed reaction is NAD(+) + (deoxyribonucleotide)n-3'-hydroxyl + 5'-phospho-(deoxyribonucleotide)m = (deoxyribonucleotide)n+m + AMP + beta-nicotinamide D-nucleotide.. DNA ligase that catalyzes the formation of phosphodiester linkages between 5'-phosphoryl and 3'-hydroxyl groups in double-stranded DNA using NAD as a coenzyme and as the energy source for the reaction. It is essential for DNA replication and repair of damaged DNA. The sequence is that of DNA ligase from Gloeothece citriformis (strain PCC 7424) (Cyanothece sp. (strain PCC 7424)).